We begin with the raw amino-acid sequence, 278 residues long: uncharacterized protein (278 aa).

Transmembrane regions (helical) follow at residues 1-21 (MLEI…GIAY), 30-50 (AFTA…PLAL), 56-76 (VVID…SFYI), 92-112 (IALP…TVIY), 116-136 (LSLN…IIYG), 146-166 (LFYA…LDFL), 170-190 (LPVS…LSFT), 209-229 (GIFL…SSSW), 230-250 (NVVQ…AIFL), and 258-278 (LVAG…PPLQ). 2 consecutive EamA domains span residues 12-136 (ICWA…IIYG) and 154-274 (FSWA…LLLL).

This sequence belongs to the EamA transporter family.

The protein localises to the cell membrane. This is an uncharacterized protein from Archaeoglobus fulgidus (strain ATCC 49558 / DSM 4304 / JCM 9628 / NBRC 100126 / VC-16).